The sequence spans 288 residues: Beta-lactamase CARB-3 (288 aa).

Residues 1 to 17 (MKFLLAFSLLIPSVVFA) form the signal peptide. Ser65 serves as the catalytic Acyl-ester intermediate. Cys72 and Cys118 form a disulfide bridge. 229-231 (RSG) is a binding site for substrate.

Belongs to the class-A beta-lactamase family.

The enzyme catalyses a beta-lactam + H2O = a substituted beta-amino acid. Functionally, hydrolyzes both carbenicillin and oxacillin. The protein is Beta-lactamase CARB-3 (carB3) of Pseudomonas aeruginosa.